A 143-amino-acid chain; its full sequence is uncharacterized protein (143 aa).

The HTH cro/C1-type domain maps to 24 to 78 (IRQRRRWQNMSQAALGEAIGVTFQQVQKYEKGSNRVGAGRLQQISDALEVHPSYF). The segment at residues 35–54 (QAALGEAIGVTFQQVQKYEK) is a DNA-binding region (H-T-H motif).

This is an uncharacterized protein from Sinorhizobium fredii (strain NBRC 101917 / NGR234).